A 303-amino-acid chain; its full sequence is Geranylgeranyl pyrophosphate synthase (303 aa).

3 residues coordinate isopentenyl diphosphate: K32, R35, and H64. Residues D71 and D75 each contribute to the Mg(2+) site. Residue R80 coordinates dimethylallyl diphosphate. R81 provides a ligand contact to isopentenyl diphosphate. The dimethylallyl diphosphate site is built by K158, T159, Q192, K209, and K219.

The protein belongs to the FPP/GGPP synthase family. In terms of assembly, homooligomer. The cofactor is Mg(2+).

It is found in the cytoplasm. It carries out the reaction isopentenyl diphosphate + dimethylallyl diphosphate = (2E)-geranyl diphosphate + diphosphate. It catalyses the reaction isopentenyl diphosphate + (2E)-geranyl diphosphate = (2E,6E)-farnesyl diphosphate + diphosphate. The catalysed reaction is isopentenyl diphosphate + (2E,6E)-farnesyl diphosphate = (2E,6E,10E)-geranylgeranyl diphosphate + diphosphate. Its pathway is isoprenoid biosynthesis; farnesyl diphosphate biosynthesis; farnesyl diphosphate from geranyl diphosphate and isopentenyl diphosphate: step 1/1. It participates in isoprenoid biosynthesis; geranyl diphosphate biosynthesis; geranyl diphosphate from dimethylallyl diphosphate and isopentenyl diphosphate: step 1/1. The protein operates within isoprenoid biosynthesis; geranylgeranyl diphosphate biosynthesis; geranylgeranyl diphosphate from farnesyl diphosphate and isopentenyl diphosphate: step 1/1. Functionally, catalyzes the trans-addition of the three molecules of IPP onto DMAPP to form geranylgeranyl pyrophosphate, an important precursor of carotenoids and geranylated proteins. This chain is Geranylgeranyl pyrophosphate synthase (ggps1), found in Dictyostelium discoideum (Social amoeba).